A 95-amino-acid polypeptide reads, in one-letter code: CRISPR-associated endoribonuclease Cas2 1 (95 aa).

Residue D8 coordinates Mg(2+).

It belongs to the CRISPR-associated endoribonuclease Cas2 protein family. As to quaternary structure, homodimer, forms a heterotetramer with a Cas1 homodimer. Mg(2+) is required as a cofactor.

CRISPR (clustered regularly interspaced short palindromic repeat), is an adaptive immune system that provides protection against mobile genetic elements (viruses, transposable elements and conjugative plasmids). CRISPR clusters contain sequences complementary to antecedent mobile elements and target invading nucleic acids. CRISPR clusters are transcribed and processed into CRISPR RNA (crRNA). Functions as a ssRNA-specific endoribonuclease. Involved in the integration of spacer DNA into the CRISPR cassette. This chain is CRISPR-associated endoribonuclease Cas2 1, found in Pyrobaculum aerophilum (strain ATCC 51768 / DSM 7523 / JCM 9630 / CIP 104966 / NBRC 100827 / IM2).